Here is a 276-residue protein sequence, read N- to C-terminus: 2-dehydro-3-deoxyphosphooctonate aldolase (276 aa).

The protein belongs to the KdsA family.

The protein resides in the cytoplasm. It carries out the reaction D-arabinose 5-phosphate + phosphoenolpyruvate + H2O = 3-deoxy-alpha-D-manno-2-octulosonate-8-phosphate + phosphate. Its pathway is carbohydrate biosynthesis; 3-deoxy-D-manno-octulosonate biosynthesis; 3-deoxy-D-manno-octulosonate from D-ribulose 5-phosphate: step 2/3. The protein operates within bacterial outer membrane biogenesis; lipopolysaccharide biosynthesis. This is 2-dehydro-3-deoxyphosphooctonate aldolase from Xylella fastidiosa (strain M23).